Consider the following 400-residue polypeptide: Aspartate/prephenate aminotransferase (400 aa).

Residues G39, W125, and N175 each coordinate L-aspartate. K239 carries the post-translational modification N6-(pyridoxal phosphate)lysine. Residue R375 participates in L-aspartate binding.

This sequence belongs to the class-I pyridoxal-phosphate-dependent aminotransferase family. Homodimer. It depends on pyridoxal 5'-phosphate as a cofactor.

The protein localises to the cytoplasm. It carries out the reaction L-aspartate + 2-oxoglutarate = oxaloacetate + L-glutamate. The enzyme catalyses L-arogenate + 2-oxoglutarate = prephenate + L-glutamate. In terms of biological role, catalyzes the reversible conversion of aspartate and 2-oxoglutarate to glutamate and oxaloacetate. Can also transaminate prephenate in the presence of glutamate. Required for symbiotic nitrogen fixation. The sequence is that of Aspartate/prephenate aminotransferase from Rhizobium meliloti (strain 1021) (Ensifer meliloti).